Consider the following 195-residue polypeptide: Interferon tau-6 (195 aa).

The signal sequence occupies residues 1–23 (MAFVLSLLMALVLVSYGPGGSLG). Cystine bridges form between cysteine 24–cysteine 122 and cysteine 52–cysteine 162. Asparagine 101 carries an N-linked (GlcNAc...) asparagine glycan.

The protein belongs to the alpha/beta interferon family. IFN-alphaII subfamily. As to expression, constitutively and exclusively expressed in the mononuclear cells of the extraembryonic trophectoderm.

Its subcellular location is the secreted. Paracrine hormone primarily responsible for maternal recognition of pregnancy. Interacts with endometrial receptors, probably type I interferon receptors, and blocks estrogen receptor expression, preventing the estrogen-induced increase in oxytocin receptor expression in the endometrium. This results in the suppression of the pulsatile endometrial release of the luteolytic hormone prostaglandin F2-alpha, hindering the regression of the corpus luteum (luteolysis) and therefore a return to ovarian cyclicity. This, and a possible direct effect of IFN-tau on prostaglandin synthesis, leads in turn to continued ovarian progesterone secretion, which stimulates the secretion by the endometrium of the nutrients required for the growth of the conceptus. In summary, displays particularly high antiviral and antiproliferative potency concurrently with particular weak cytotoxicity, high antiluteolytic activity and immunomodulatory properties. In contrast with other IFNs, IFN-tau is not virally inducible. The sequence is that of Interferon tau-6 (IFNT6) from Ovis aries (Sheep).